We begin with the raw amino-acid sequence, 464 residues long: Argininosuccinate lyase (464 aa).

At alanine 2 the chain carries N-acetylalanine. Lysine 7 carries the post-translational modification N6-acetyllysine. A 2-(N(omega)-L-arginino)succinate-binding site is contributed by serine 27. An N6-acetyllysine modification is found at lysine 69. 2-(N(omega)-L-arginino)succinate-binding residues include asparagine 114 and threonine 159. The active-site Proton acceptor is histidine 160. The active-site Proton donor is the serine 281. Lysine 288 is modified (N6-acetyllysine). The 2-(N(omega)-L-arginino)succinate site is built by asparagine 289, tyrosine 321, glutamine 326, and lysine 329.

The protein belongs to the lyase 1 family. Argininosuccinate lyase subfamily. Homotetramer. Forms tissue-specific complexes with ASS1, SLC7A1, HSP90AA1 and nitric oxide synthase NOS1, NOS2 or NOS3; the complex maintenance is independent of ASL catalytic function. Acetylation modifies enzyme activity in response to alterations of extracellular nutrient availability. Acetylation increased with trichostin A (TSA) or with nicotinamide (NAM). Glucose increases acetylation by about a factor of 3 with decreasing enzyme activity. Acetylation on Lys-288 is decreased on the addition of extra amino acids resulting in activation of enzyme activity.

The catalysed reaction is 2-(N(omega)-L-arginino)succinate = fumarate + L-arginine. The protein operates within amino-acid biosynthesis; L-arginine biosynthesis; L-arginine from L-ornithine and carbamoyl phosphate: step 3/3. It participates in nitrogen metabolism; urea cycle; L-arginine and fumarate from (N(omega)-L-arginino)succinate: step 1/1. Enzyme activity is regulated by acetylation. Catalyzes the reversible cleavage of L-argininosuccinate to fumarate and L-arginine, an intermediate step reaction in the urea cycle mostly providing for hepatic nitrogen detoxification into excretable urea as well as de novo L-arginine synthesis in nonhepatic tissues. Essential regulator of intracellular and extracellular L-arginine pools. As part of citrulline-nitric oxide cycle, forms tissue-specific multiprotein complexes with argininosuccinate synthase ASS1, transport protein SLC7A1 and nitric oxide synthase NOS1, NOS2 or NOS3, allowing for cell-autonomous L-arginine synthesis while channeling extracellular L-arginine to nitric oxide synthesis pathway. This chain is Argininosuccinate lyase (ASL), found in Macaca fascicularis (Crab-eating macaque).